Reading from the N-terminus, the 212-residue chain is Cell division protein SepF (212 aa).

The disordered stretch occupies residues 32–104 (RYADPDTSYD…APLGSDAHRE (73 aa)). Over residues 64–73 (EAEEDGGDYG) the composition is skewed to acidic residues.

The protein belongs to the SepF family. In terms of assembly, homodimer. Interacts with FtsZ.

It localises to the cytoplasm. Functionally, cell division protein that is part of the divisome complex and is recruited early to the Z-ring. Probably stimulates Z-ring formation, perhaps through the cross-linking of FtsZ protofilaments. Its function overlaps with FtsA. In Saccharopolyspora erythraea (strain ATCC 11635 / DSM 40517 / JCM 4748 / NBRC 13426 / NCIMB 8594 / NRRL 2338), this protein is Cell division protein SepF.